A 568-amino-acid polypeptide reads, in one-letter code: Urease subunit alpha (568 aa).

The Urease domain occupies 129 to 568; sequence GAIDSHIHFI…LPMAQRYFLF (440 aa). The Ni(2+) site is built by His-134, His-136, and Lys-217. At Lys-217 the chain carries N6-carboxylysine. His-219 provides a ligand contact to substrate. Ni(2+) contacts are provided by His-246 and His-272. His-320 serves as the catalytic Proton donor. Asp-360 lines the Ni(2+) pocket.

This sequence belongs to the metallo-dependent hydrolases superfamily. Urease alpha subunit family. In terms of assembly, heterotrimer of UreA (gamma), UreB (beta) and UreC (alpha) subunits. Three heterotrimers associate to form the active enzyme. It depends on Ni cation as a cofactor. Post-translationally, carboxylation allows a single lysine to coordinate two nickel ions.

The protein localises to the cytoplasm. It catalyses the reaction urea + 2 H2O + H(+) = hydrogencarbonate + 2 NH4(+). It functions in the pathway nitrogen metabolism; urea degradation; CO(2) and NH(3) from urea (urease route): step 1/1. This Saccharophagus degradans (strain 2-40 / ATCC 43961 / DSM 17024) protein is Urease subunit alpha.